The following is a 149-amino-acid chain: Large ribosomal subunit protein bL9 (149 aa).

It belongs to the bacterial ribosomal protein bL9 family.

Binds to the 23S rRNA. The chain is Large ribosomal subunit protein bL9 from Tolumonas auensis (strain DSM 9187 / NBRC 110442 / TA 4).